The primary structure comprises 719 residues: Cyclin-dependent kinase 11.1 (719 aa).

3 stretches are compositionally biased toward basic and acidic residues: residues 1-20 (MSDHLGSSHDEGELSDESHK), 38-48 (KGLESKMRESI), and 78-129 (KAKE…DQKV). 2 disordered regions span residues 1–215 (MSDH…KDDD) and 231–315 (EEKE…EMTE). Over residues 130 to 140 (HEHRHHHHHRK) the composition is skewed to basic residues. Residues 141–163 (HETDGHRTNRSNRDRSSERDSEK) show a composition bias toward basic and acidic residues. A compositionally biased stretch (basic residues) spans 164–174 (HKRHIDRHKKS). Basic and acidic residues-rich tracts occupy residues 191–215 (HTDVPADAKLFDRILDPNYKKKDDD) and 264–274 (DDTKPKSPGKA). Acidic residues predominate over residues 275-285 (EDDDDVIEVLD). The region spanning 356-647 (YECVNRVDEG…ATQALDHEWF (292 aa)) is the Protein kinase domain. ATP contacts are provided by residues 362-370 (VDEGTFGVV) and Lys-385. Asp-484 serves as the catalytic Proton acceptor. The interval 657–689 (EEFPTFPAKSEQNKAPPPAKQKQQENRISHVDP) is disordered. A compositionally biased stretch (basic and acidic residues) spans 678-689 (KQQENRISHVDP).

This sequence belongs to the protein kinase superfamily. CMGC Ser/Thr protein kinase family. CDC2/CDKX subfamily. Broadly expressed in somatic and germ line cells (at protein level). Not expressed in sperm (at protein level).

Its subcellular location is the nucleus. The catalysed reaction is L-seryl-[protein] + ATP = O-phospho-L-seryl-[protein] + ADP + H(+). It carries out the reaction L-threonyl-[protein] + ATP = O-phospho-L-threonyl-[protein] + ADP + H(+). Probable cyclin-dependent kinase whose activity is most likely regulated by the cyclin cyl-1/Cylin-L. Important for normal oocyte and sperm development; probably required during multiple stages of gametogenesis. Plays a role in the activation of RAS-ERK signaling in the germ line. Also acts partially redundantly with cdk-11.2 to ensure embryonic viability. The polypeptide is Cyclin-dependent kinase 11.1 (Caenorhabditis elegans).